Consider the following 86-residue polypeptide: MKPGIHPEYGPVVFRDRSTGTQFLTRSTATSEERVEWSDGNSYPLIVVDVTSASHPFWTGGRQVLDTQGRVEKFRRRYGDRARGGQ.

It belongs to the bacterial ribosomal protein bL31 family. Type B subfamily. Part of the 50S ribosomal subunit.

The polypeptide is Large ribosomal subunit protein bL31B (Saccharopolyspora erythraea (strain ATCC 11635 / DSM 40517 / JCM 4748 / NBRC 13426 / NCIMB 8594 / NRRL 2338)).